Reading from the N-terminus, the 292-residue chain is Lipoyl synthase (292 aa).

The [4Fe-4S] cluster site is built by C38, C43, C49, C64, C68, C71, and S277. A Radical SAM core domain is found at 50–266; that stretch reads WSKGTATFLL…REIALDAGFR (217 aa).

Belongs to the radical SAM superfamily. Lipoyl synthase family. [4Fe-4S] cluster is required as a cofactor.

It is found in the cytoplasm. It carries out the reaction [[Fe-S] cluster scaffold protein carrying a second [4Fe-4S](2+) cluster] + N(6)-octanoyl-L-lysyl-[protein] + 2 oxidized [2Fe-2S]-[ferredoxin] + 2 S-adenosyl-L-methionine + 4 H(+) = [[Fe-S] cluster scaffold protein] + N(6)-[(R)-dihydrolipoyl]-L-lysyl-[protein] + 4 Fe(3+) + 2 hydrogen sulfide + 2 5'-deoxyadenosine + 2 L-methionine + 2 reduced [2Fe-2S]-[ferredoxin]. Its pathway is protein modification; protein lipoylation via endogenous pathway; protein N(6)-(lipoyl)lysine from octanoyl-[acyl-carrier-protein]: step 2/2. In terms of biological role, catalyzes the radical-mediated insertion of two sulfur atoms into the C-6 and C-8 positions of the octanoyl moiety bound to the lipoyl domains of lipoate-dependent enzymes, thereby converting the octanoylated domains into lipoylated derivatives. The sequence is that of Lipoyl synthase from Chlorobaculum parvum (strain DSM 263 / NCIMB 8327) (Chlorobium vibrioforme subsp. thiosulfatophilum).